A 326-amino-acid chain; its full sequence is Flotillin-like protein FloA (326 aa).

The next 2 helical transmembrane spans lie at 6–26 (IILF…GSSV) and 27–47 (SLWI…IVFM).

This sequence belongs to the flotillin-like FloA family. Homooligomerizes.

It localises to the cell membrane. Its subcellular location is the membrane raft. In terms of biological role, found in functional membrane microdomains (FMM) that may be equivalent to eukaryotic membrane rafts. FMMs are highly dynamic and increase in number as cells age. Flotillins are thought to be important factors in membrane fluidity. The sequence is that of Flotillin-like protein FloA from Desulfosudis oleivorans (strain DSM 6200 / JCM 39069 / Hxd3) (Desulfococcus oleovorans).